We begin with the raw amino-acid sequence, 167 residues long: Translationally-controlled tumor protein homolog (167 aa).

Residues 1–167 (MIIFTDVISG…WKHGVSEDKI (167 aa)) form the TCTP domain.

This sequence belongs to the TCTP family.

It localises to the cytoplasm. It is found in the cytoskeleton. Functionally, involved in protein synthesis. Involved in microtubule stabilization. This is Translationally-controlled tumor protein homolog from Debaryomyces hansenii (strain ATCC 36239 / CBS 767 / BCRC 21394 / JCM 1990 / NBRC 0083 / IGC 2968) (Yeast).